Reading from the N-terminus, the 119-residue chain is uncharacterized protein (119 aa).

2 consecutive transmembrane segments (helical) span residues 57–77 and 80–100; these read FSHH…SILF and YIFV…FILH.

The protein localises to the membrane. This is an uncharacterized protein from Saccharomyces cerevisiae (strain ATCC 204508 / S288c) (Baker's yeast).